Reading from the N-terminus, the 140-residue chain is Translation initiation factor 2 subunit beta (140 aa).

The protein belongs to the eIF-2-beta/eIF-5 family. Heterotrimer composed of an alpha, a beta and a gamma chain.

Its function is as follows. eIF-2 functions in the early steps of protein synthesis by forming a ternary complex with GTP and initiator tRNA. This Pyrococcus furiosus (strain ATCC 43587 / DSM 3638 / JCM 8422 / Vc1) protein is Translation initiation factor 2 subunit beta.